The primary structure comprises 458 residues: NADH-quinone oxidoreductase subunit N (458 aa).

Transmembrane regions (helical) follow at residues 3-23, 29-49, 64-84, 92-112, 147-167, 188-208, 222-242, 265-285, 291-311, 320-340, 358-378, 394-414, and 437-457; these read QYLF…LLFL, FGLI…TCTS, QNVK…AIAV, FSVL…SSTL, TLLG…IFVV, ILLF…HAWI, FFAV…ISNL, NILF…AFGQ, FIGF…SNSA, IAYA…VLML, VALA…FIGF, IPTA…YARI, and LLTS…VLLI.

It belongs to the complex I subunit 2 family. In terms of assembly, NDH-1 is composed of 14 different subunits. Subunits NuoA, H, J, K, L, M, N constitute the membrane sector of the complex.

It localises to the cell inner membrane. It carries out the reaction a quinone + NADH + 5 H(+)(in) = a quinol + NAD(+) + 4 H(+)(out). Its function is as follows. NDH-1 shuttles electrons from NADH, via FMN and iron-sulfur (Fe-S) centers, to quinones in the respiratory chain. The immediate electron acceptor for the enzyme in this species is believed to be ubiquinone. Couples the redox reaction to proton translocation (for every two electrons transferred, four hydrogen ions are translocated across the cytoplasmic membrane), and thus conserves the redox energy in a proton gradient. The sequence is that of NADH-quinone oxidoreductase subunit N from Neorickettsia risticii (strain Illinois).